Reading from the N-terminus, the 143-residue chain is Ribonuclease HI (143 aa).

Residues 1 to 136 (MQEIEIFCDG…CDSLAKLEAQ (136 aa)) form the RNase H type-1 domain. Residues Asp-9, Glu-47, Asp-69, and Asp-128 each contribute to the Mg(2+) site.

The protein belongs to the RNase H family. In terms of assembly, monomer. Requires Mg(2+) as cofactor.

Its subcellular location is the cytoplasm. The catalysed reaction is Endonucleolytic cleavage to 5'-phosphomonoester.. Endonuclease that specifically degrades the RNA of RNA-DNA hybrids. This chain is Ribonuclease HI (rnhA), found in Helicobacter pylori (strain ATCC 700392 / 26695) (Campylobacter pylori).